A 263-amino-acid chain; its full sequence is Proteasome subunit alpha type-1 (263 aa).

Met-1 is subject to N-acetylmethionine. Residue Ser-110 is modified to Phosphoserine; alternate. The O-linked (GlcNAc) serine; alternate glycan is linked to Ser-110. Lys-115 participates in a covalent cross-link: Glycyl lysine isopeptide (Lys-Gly) (interchain with G-Cter in ubiquitin). Phosphoserine is present on Ser-177. Lys-208 participates in a covalent cross-link: Glycyl lysine isopeptide (Lys-Gly) (interchain with G-Cter in ubiquitin). A disordered region spans residues 232–263 (FLDGLEERPQRKAQPSQAADEPAEKADEPMEH). Basic and acidic residues predominate over residues 253-263 (PAEKADEPMEH).

It belongs to the peptidase T1A family. In terms of assembly, the 26S proteasome consists of a 20S proteasome core and two 19S regulatory subunits. The 20S proteasome core is a barrel-shaped complex made of 28 subunits that are arranged in four stacked rings. The two outer rings are each formed by seven alpha subunits, and the two inner rings are formed by seven beta subunits. The proteolytic activity is exerted by three beta-subunits PSMB5, PSMB6 and PSMB7. Interacts with NOTCH3. Interacts with ZFAND1. Post-translationally, proteolytically cleaved from a C-terminal extension in the course of the conversion of the proteasome from its latent form into its active form. Ubiquitous.

It localises to the cytoplasm. The protein localises to the nucleus. Component of the 20S core proteasome complex involved in the proteolytic degradation of most intracellular proteins. This complex plays numerous essential roles within the cell by associating with different regulatory particles. Associated with two 19S regulatory particles, forms the 26S proteasome and thus participates in the ATP-dependent degradation of ubiquitinated proteins. The 26S proteasome plays a key role in the maintenance of protein homeostasis by removing misfolded or damaged proteins that could impair cellular functions, and by removing proteins whose functions are no longer required. Associated with the PA200 or PA28, the 20S proteasome mediates ubiquitin-independent protein degradation. This type of proteolysis is required in several pathways including spermatogenesis (20S-PA200 complex) or generation of a subset of MHC class I-presented antigenic peptides (20S-PA28 complex). This Rattus norvegicus (Rat) protein is Proteasome subunit alpha type-1 (Psma1).